Here is a 46-residue protein sequence, read N- to C-terminus: Transcriptional regulator SEHBP (46 aa).

In terms of assembly, interacts with histone H2B. Also interacts with chromatin-binding proteins HMGN1 and HMGN3.

It is found in the nucleus. Its subcellular location is the cytoplasm. Plays a role in transcription regulation. The polypeptide is Transcriptional regulator SEHBP (Homo sapiens (Human)).